The sequence spans 474 residues: Bifunctional protein HldE (474 aa).

Residues 1-318 (MKMTLPDFHC…ENAIRGRAET (318 aa)) form a ribokinase region. 195–198 (NLSE) provides a ligand contact to ATP. The active site involves aspartate 264. A cytidylyltransferase region spans residues 344–474 (MTNGCFDILH…TNIIKAIKNQ (131 aa)).

In the N-terminal section; belongs to the carbohydrate kinase PfkB family. This sequence in the C-terminal section; belongs to the cytidylyltransferase family. Homodimer.

The catalysed reaction is D-glycero-beta-D-manno-heptose 7-phosphate + ATP = D-glycero-beta-D-manno-heptose 1,7-bisphosphate + ADP + H(+). It carries out the reaction D-glycero-beta-D-manno-heptose 1-phosphate + ATP + H(+) = ADP-D-glycero-beta-D-manno-heptose + diphosphate. It functions in the pathway nucleotide-sugar biosynthesis; ADP-L-glycero-beta-D-manno-heptose biosynthesis; ADP-L-glycero-beta-D-manno-heptose from D-glycero-beta-D-manno-heptose 7-phosphate: step 1/4. Its pathway is nucleotide-sugar biosynthesis; ADP-L-glycero-beta-D-manno-heptose biosynthesis; ADP-L-glycero-beta-D-manno-heptose from D-glycero-beta-D-manno-heptose 7-phosphate: step 3/4. The protein operates within bacterial outer membrane biogenesis; LPS core biosynthesis. Functionally, catalyzes the phosphorylation of D-glycero-D-manno-heptose 7-phosphate at the C-1 position to selectively form D-glycero-beta-D-manno-heptose-1,7-bisphosphate. Its function is as follows. Catalyzes the ADP transfer from ATP to D-glycero-beta-D-manno-heptose 1-phosphate, yielding ADP-D-glycero-beta-D-manno-heptose. This chain is Bifunctional protein HldE, found in Photorhabdus laumondii subsp. laumondii (strain DSM 15139 / CIP 105565 / TT01) (Photorhabdus luminescens subsp. laumondii).